The following is a 117-amino-acid chain: Huntingtin-interacting protein M (117 aa).

2 disordered regions span residues 1 to 30 (MSEK…VPRS) and 71 to 117 (EASN…RKND). Polar residues predominate over residues 72–81 (ASNNGSMRNT). A compositionally biased stretch (basic and acidic residues) spans 82–117 (SQDREREVDNNREPHSAESDVTRFLFDEMPKSRKND).

As to quaternary structure, may interact with the N-terminus of HD.

The chain is Huntingtin-interacting protein M from Homo sapiens (Human).